The sequence spans 172 residues: NADH-quinone oxidoreductase subunit B (172 aa).

Cys46, Cys47, Cys111, and Cys141 together coordinate [4Fe-4S] cluster.

Belongs to the complex I 20 kDa subunit family. As to quaternary structure, NDH-1 is composed of 14 different subunits. Subunits NuoB, C, D, E, F, and G constitute the peripheral sector of the complex. Requires [4Fe-4S] cluster as cofactor.

The protein resides in the cell membrane. It catalyses the reaction a quinone + NADH + 5 H(+)(in) = a quinol + NAD(+) + 4 H(+)(out). In terms of biological role, NDH-1 shuttles electrons from NADH, via FMN and iron-sulfur (Fe-S) centers, to quinones in the respiratory chain. The immediate electron acceptor for the enzyme in this species is believed to be a menaquinone. Couples the redox reaction to proton translocation (for every two electrons transferred, four hydrogen ions are translocated across the cytoplasmic membrane), and thus conserves the redox energy in a proton gradient. The protein is NADH-quinone oxidoreductase subunit B of Bacillus anthracis (strain A0248).